The sequence spans 328 residues: 2,3-diketo-L-gulonate-binding periplasmic protein YiaO (328 aa).

Residues 1–24 (MKLRSVTYALFIAGLAAFSTSSLA) form the signal peptide.

In terms of assembly, the complex comprises the extracytoplasmic solute receptor protein YiaO, and the two transmembrane proteins YiaM and YiaN.

It is found in the periplasm. Part of the tripartite ATP-independent periplasmic (TRAP) transport system YiaMNO involved in the uptake of 2,3-diketo-L-gulonate. This protein specifically binds 2,3-diketo-L-gulonate. Is not able to bind either L-ascorbate or dehydroascorbate. This is 2,3-diketo-L-gulonate-binding periplasmic protein YiaO (yiaO) from Escherichia coli (strain K12).